Reading from the N-terminus, the 162-residue chain is Ribosomal RNA large subunit methyltransferase H (162 aa).

Position 108 (G108) interacts with S-adenosyl-L-methionine.

Belongs to the RNA methyltransferase RlmH family. As to quaternary structure, homodimer.

It is found in the cytoplasm. It catalyses the reaction pseudouridine(1915) in 23S rRNA + S-adenosyl-L-methionine = N(3)-methylpseudouridine(1915) in 23S rRNA + S-adenosyl-L-homocysteine + H(+). In terms of biological role, specifically methylates the pseudouridine at position 1915 (m3Psi1915) in 23S rRNA. The sequence is that of Ribosomal RNA large subunit methyltransferase H from Methylobacterium nodulans (strain LMG 21967 / CNCM I-2342 / ORS 2060).